The following is a 291-amino-acid chain: ATP synthase gamma chain (291 aa).

This sequence belongs to the ATPase gamma chain family. F-type ATPases have 2 components, CF(1) - the catalytic core - and CF(0) - the membrane proton channel. CF(1) has five subunits: alpha(3), beta(3), gamma(1), delta(1), epsilon(1). CF(0) has three main subunits: a, b and c.

The protein resides in the cell membrane. Produces ATP from ADP in the presence of a proton gradient across the membrane. The gamma chain is believed to be important in regulating ATPase activity and the flow of protons through the CF(0) complex. The polypeptide is ATP synthase gamma chain (Buchnera aphidicola subsp. Schizaphis graminum (strain Sg)).